Here is a 248-residue protein sequence, read N- to C-terminus: Mannose-binding protein C (248 aa).

The first 20 residues, 1–20 (MSLFPSLPLLLLSMVAASYS), serve as a signal peptide directing secretion. Residues 42-99 (GINGFPGKDGRDGTKGEKGEPGQGLRGLQGPPGKLGPPGNPGPSGSPGPKGQKGDPGK) enclose the Collagen-like domain. The tract at residues 43–113 (INGFPGKDGR…DSSLAASERK (71 aa)) is disordered. Pro47 is subject to 4-hydroxyproline. The segment covering 49 to 61 (KDGRDGTKGEKGE) has biased composition (basic and acidic residues). A 4-hydroxyproline mark is found at Pro73, Pro79, Pro82, and Pro88. The segment covering 75–87 (KLGPPGNPGPSGS) has biased composition (pro residues). The span at 93-102 (QKGDPGKSPD) shows a compositional bias: basic and acidic residues. The stretch at 112–130 (RKALQTEMARIKKWLTFSL) forms a coiled coil. A C-type lectin domain is found at 134–245 (VGNKFFLTNG…CSTSHLAVCE (112 aa)). 2 cysteine pairs are disulfide-bonded: Cys155/Cys244 and Cys222/Cys236.

Oligomeric complex of 3 or more homotrimers. Interacts with MASP1 and MASP2. Interacts with MEP1A and MEP1B and may inhibit their catalytic activity. In terms of processing, hydroxylation on proline residues within the sequence motif, GXPG, is most likely to be 4-hydroxy as this fits the requirement for 4-hydroxylation in vertebrates.

It localises to the secreted. Functionally, calcium-dependent lectin involved in innate immune defense. Binds mannose, fucose and N-acetylglucosamine on different microorganisms and activates the lectin complement pathway. Binds to late apoptotic cells, as well as to apoptotic blebs and to necrotic cells, but not to early apoptotic cells, facilitating their uptake by macrophages. This chain is Mannose-binding protein C (MBL2), found in Gorilla gorilla gorilla (Western lowland gorilla).